The chain runs to 472 residues: ATP-dependent rRNA helicase rrp3 (472 aa).

The tract at residues 1-52 is disordered; it reads MPAIKKRKIAREAPQQEDHSDSEAHSSASEDAAPNTTEQEQEPSEAPKQAPK. Basic and acidic residues predominate over residues 10-24; the sequence is AREAPQQEDHSDSEA. Residues 52–80 carry the Q motif motif; the sequence is KSFKELGLIEQLCEACDSMGYKAPTAIQA. The 172-residue stretch at 83–254 folds into the Helicase ATP-binding domain; it reads IPLALQGRDL…RASLQNPLRV (172 aa). 96–103 provides a ligand contact to ATP; that stretch reads AETGSGKT. The short motif at 202-205 is the DEAD box element; the sequence is DEAD. One can recognise a Helicase C-terminal domain in the interval 282 to 426; sequence YLVYLLNEFV…EYPAEKDEVM (145 aa). A disordered region spans residues 443–472; sequence MKNYDEKKGSRGKKFAKGKRSREDMDQEEG. Over residues 452-462 the composition is skewed to basic residues; the sequence is SRGKKFAKGKR.

It belongs to the DEAD box helicase family. DDX47/RRP3 subfamily. As to quaternary structure, interacts with the SSU processome.

Its subcellular location is the nucleus. It carries out the reaction ATP + H2O = ADP + phosphate + H(+). Its function is as follows. ATP-dependent rRNA helicase required for pre-ribosomal RNA processing. Involved in the maturation of the 35S-pre-rRNA and to its cleavage to mature 18S rRNA. The sequence is that of ATP-dependent rRNA helicase rrp3 from Aspergillus oryzae (strain ATCC 42149 / RIB 40) (Yellow koji mold).